Here is a 201-residue protein sequence, read N- to C-terminus: Ribonuclease HII (201 aa).

The RNase H type-2 domain occupies 14–201; sequence NLIAGVDEVG…KPVKRILGIE (188 aa). A divalent metal cation is bound by residues Asp-20, Glu-21, and Asp-112.

This sequence belongs to the RNase HII family. Mn(2+) serves as cofactor. Requires Mg(2+) as cofactor.

The protein resides in the cytoplasm. It carries out the reaction Endonucleolytic cleavage to 5'-phosphomonoester.. Endonuclease that specifically degrades the RNA of RNA-DNA hybrids. This Photobacterium profundum (strain SS9) protein is Ribonuclease HII.